A 545-amino-acid polypeptide reads, in one-letter code: CTP synthase (545 aa).

The interval 1–266 (MTTNYIFVTG…DDYICKRFSL (266 aa)) is amidoligase domain. Residue serine 14 participates in CTP binding. Serine 14 lines the UTP pocket. Residues 15–20 (SLGKGI) and aspartate 72 each bind ATP. 2 residues coordinate Mg(2+): aspartate 72 and glutamate 140. Residues 147–149 (DIE), 187–192 (KTKPTQ), and lysine 223 contribute to the CTP site. Residues 187–192 (KTKPTQ) and lysine 223 contribute to the UTP site. ATP is bound at residue 239 to 241 (KDV). One can recognise a Glutamine amidotransferase type-1 domain in the interval 291–542 (TIGMVGKYIE…VKAASEYQKR (252 aa)). An L-glutamine-binding site is contributed by glycine 352. Cysteine 379 (nucleophile; for glutamine hydrolysis) is an active-site residue. L-glutamine contacts are provided by residues 380–383 (LGMQ), glutamate 403, and arginine 470. Residues histidine 515 and glutamate 517 contribute to the active site.

It belongs to the CTP synthase family. In terms of assembly, homotetramer.

The enzyme catalyses UTP + L-glutamine + ATP + H2O = CTP + L-glutamate + ADP + phosphate + 2 H(+). The catalysed reaction is L-glutamine + H2O = L-glutamate + NH4(+). It carries out the reaction UTP + NH4(+) + ATP = CTP + ADP + phosphate + 2 H(+). Its pathway is pyrimidine metabolism; CTP biosynthesis via de novo pathway; CTP from UDP: step 2/2. Allosterically activated by GTP, when glutamine is the substrate; GTP has no effect on the reaction when ammonia is the substrate. The allosteric effector GTP functions by stabilizing the protein conformation that binds the tetrahedral intermediate(s) formed during glutamine hydrolysis. Inhibited by the product CTP, via allosteric rather than competitive inhibition. Functionally, catalyzes the ATP-dependent amination of UTP to CTP with either L-glutamine or ammonia as the source of nitrogen. Regulates intracellular CTP levels through interactions with the four ribonucleotide triphosphates. This Klebsiella pneumoniae subsp. pneumoniae (strain ATCC 700721 / MGH 78578) protein is CTP synthase.